Reading from the N-terminus, the 1077-residue chain is ATP-dependent helicase/deoxyribonuclease subunit B (1077 aa).

This sequence belongs to the helicase family. AddB/RexB type 2 subfamily. As to quaternary structure, heterodimer of AddA and RexB. Requires Mg(2+) as cofactor.

Functionally, the heterodimer acts as both an ATP-dependent DNA helicase and an ATP-dependent, dual-direction single-stranded exonuclease. Recognizes the chi site generating a DNA molecule suitable for the initiation of homologous recombination. This subunit has 5' -&gt; 3' nuclease activity but not helicase activity. This chain is ATP-dependent helicase/deoxyribonuclease subunit B, found in Streptococcus agalactiae serotype Ia (strain ATCC 27591 / A909 / CDC SS700).